The following is a 227-amino-acid chain: uncharacterized protein (227 aa).

Helical transmembrane passes span 12–32 (IVLF…YLYA) and 80–100 (IILI…KIPL).

It localises to the cell membrane. This is an uncharacterized protein from Methanocaldococcus jannaschii (strain ATCC 43067 / DSM 2661 / JAL-1 / JCM 10045 / NBRC 100440) (Methanococcus jannaschii).